A 97-amino-acid chain; its full sequence is Co-chaperonin GroES (97 aa).

The protein belongs to the GroES chaperonin family. As to quaternary structure, heptamer of 7 subunits arranged in a ring. Interacts with the chaperonin GroEL.

Its subcellular location is the cytoplasm. Functionally, together with the chaperonin GroEL, plays an essential role in assisting protein folding. The GroEL-GroES system forms a nano-cage that allows encapsulation of the non-native substrate proteins and provides a physical environment optimized to promote and accelerate protein folding. GroES binds to the apical surface of the GroEL ring, thereby capping the opening of the GroEL channel. This chain is Co-chaperonin GroES, found in Pseudomonas entomophila (strain L48).